The primary structure comprises 597 residues: Elongation factor 4 (597 aa).

The 183-residue stretch at 2–184 folds into the tr-type G domain; it reads DHIRNFSIIA…ALIAKVPPPK (183 aa). GTP-binding positions include 14–19 and 131–134; these read DHGKST and NKID.

Belongs to the TRAFAC class translation factor GTPase superfamily. Classic translation factor GTPase family. LepA subfamily.

It is found in the cell inner membrane. The catalysed reaction is GTP + H2O = GDP + phosphate + H(+). Functionally, required for accurate and efficient protein synthesis under certain stress conditions. May act as a fidelity factor of the translation reaction, by catalyzing a one-codon backward translocation of tRNAs on improperly translocated ribosomes. Back-translocation proceeds from a post-translocation (POST) complex to a pre-translocation (PRE) complex, thus giving elongation factor G a second chance to translocate the tRNAs correctly. Binds to ribosomes in a GTP-dependent manner. The protein is Elongation factor 4 of Cupriavidus pinatubonensis (strain JMP 134 / LMG 1197) (Cupriavidus necator (strain JMP 134)).